A 630-amino-acid polypeptide reads, in one-letter code: Transcription factor MYC1 (630 aa).

Disordered regions lie at residues 356 to 398 (FGDS…NNEE) and 430 to 463 (VKEAVVEPEKKPRKRGRKPANGREEPLNHVEAER). A compositionally biased stretch (basic residues) spans 440–449 (KPRKRGRKPA). A compositionally biased stretch (basic and acidic residues) spans 450–463 (NGREEPLNHVEAER). The tract at residues 453–466 (EEPLNHVEAERQRR) is basic motif; degenerate. A bHLH domain is found at 453-502 (EEPLNHVEAERQRREKLNQRFYALRAVVPNVSKMDKASLLGDAIAYINEL). The tract at residues 467–502 (EKLNQRFYALRAVVPNVSKMDKASLLGDAIAYINEL) is helix-loop-helix motif.

As to expression, highly expressed in trichomes and at lower levels in leaves and flowers. Expressed at low levels in roots, stems, leaves, flowers and fruits.

It is found in the nucleus. Functionally, transcriptional activator that binds to the G-box motif (5'-AACGTG-3') found in a number of promoters of jasmonate-induced genes. Transcription activator involved in the transcriptional regulation of terpene biosynthesis in glandular trichomes. Binds to the promoter of the linalool synthase TPS5 and promotes TPS5 gene transactivation. Acts synergistically with EOT1 in the transactivation of TPS5. Involved in type VI glandular trichome development. Involved in the activation of terpene synthases required for volatile mono- and sesquiterpenes synthesis by the glandular cells of type VI trichomes. The chain is Transcription factor MYC1 from Solanum lycopersicum (Tomato).